The sequence spans 158 residues: S-ribosylhomocysteine lyase (158 aa).

Residues His-56, His-60, and Cys-125 each contribute to the Fe cation site.

Belongs to the LuxS family. As to quaternary structure, homodimer. It depends on Fe cation as a cofactor.

It carries out the reaction S-(5-deoxy-D-ribos-5-yl)-L-homocysteine = (S)-4,5-dihydroxypentane-2,3-dione + L-homocysteine. Involved in the synthesis of autoinducer 2 (AI-2) which is secreted by bacteria and is used to communicate both the cell density and the metabolic potential of the environment. The regulation of gene expression in response to changes in cell density is called quorum sensing. Catalyzes the transformation of S-ribosylhomocysteine (RHC) to homocysteine (HC) and 4,5-dihydroxy-2,3-pentadione (DPD). This chain is S-ribosylhomocysteine lyase, found in Leuconostoc citreum (strain KM20).